We begin with the raw amino-acid sequence, 251 residues long: Coproheme decarboxylase (251 aa).

Fe-coproporphyrin III contacts are provided by residues Arg-133, 147–151 (YPMSK), His-174, Gln-187, and Ser-225. The active site involves Tyr-147.

It belongs to the ChdC family. Type 1 subfamily. The cofactor is Fe-coproporphyrin III.

The catalysed reaction is Fe-coproporphyrin III + 2 H2O2 + 2 H(+) = heme b + 2 CO2 + 4 H2O. It carries out the reaction Fe-coproporphyrin III + H2O2 + H(+) = harderoheme III + CO2 + 2 H2O. It catalyses the reaction harderoheme III + H2O2 + H(+) = heme b + CO2 + 2 H2O. It functions in the pathway porphyrin-containing compound metabolism; protoheme biosynthesis. Functionally, involved in coproporphyrin-dependent heme b biosynthesis. Catalyzes the decarboxylation of Fe-coproporphyrin III (coproheme) to heme b (protoheme IX), the last step of the pathway. The reaction occurs in a stepwise manner with a three-propionate intermediate. This chain is Coproheme decarboxylase, found in Listeria monocytogenes serotype 4b (strain CLIP80459).